A 138-amino-acid polypeptide reads, in one-letter code: Putative pre-16S rRNA nuclease (138 aa).

This sequence belongs to the YqgF nuclease family.

Its subcellular location is the cytoplasm. Functionally, could be a nuclease involved in processing of the 5'-end of pre-16S rRNA. This chain is Putative pre-16S rRNA nuclease, found in Geobacillus sp. (strain WCH70).